We begin with the raw amino-acid sequence, 931 residues long: MLLFFTLGLLIHFVFFASIFDIYFTSPLVHGMTPQFTPLPPPARRLVLFVADGLRADALYELDENGNSRAPFIRNIIMHEGSWGISHTRVPTESRPGHVALIAGFYEDVSAVAKGWKENPVEFDSLFNESKYTWSWGSPDILPMFAKGASGDHVYTYSYDAKREDFGAQDATKLDTWVFDNVKDFFHHARNNQSLFSKINEEKIVFFLHLLGIDTNGHAHRPSSRDYKHNIKKVDDGVKEIVSMFNHFYGNDGKTTFIFTSDHGMTDWGSHGAGHPSETLTPLVTWGAGIKYPQRVSAQQFDDAFLKEWRLENWKRLDVNQADIAPLMTSLIGVPFPLNSVGILPVDYLNNTDLFKAESMFTNAVQILEQFKVKMTQKKEVTLPFLFTPFKLLSDSKQFNILRKARSYIKHRKFDEVVSLCKELIHLALKGLSYYHTYDRFFLGVNVVIGFVGWISYASLLIIKSHSNLIKGVSKEVKKPSHLLPCSFVAIGILVAFFLLIQACPWTYYVYGLLPLPIWYAVLREFQVIQDLVVSVLTYPLSHFVGYLLAFTLGIEVLVLSFFYRYMLTAGLTAFAAWPFLTRLWTRAKMTSLSWTFFSLLLAVFPLMPVVGRKPDISLVMGAGLLVLLLSLCVVTSLMKRKDSFIKEELLVHLLQVLSTVLSMYVVYSTQSSLLRKQGLPLMNQIISWATLASSLVVPLLSSPVLFQRLFSILLSLMSTYLLLSTGYEALFPLVLSCLMFVWINIEQETLQQSGVCCKQKLTSIQFSYNTDITQFRQLYLDDIRRAFFLVFFLVTAFFGTGNIASINSFDLASVYCFLTVFSPFMMGALMMWKILIPFVLVMCAFEAVQLTTQLSSKSLFLIVLVISDIMALHFFFLVKDYGSWLDIGTSISHYVIVMSMTIFLVFLNGLAQLLTTKKLRLCGKPKSHFM.

M1 is a topological domain (cytoplasmic). Residues 2–24 (LLFFTLGLLIHFVFFASIFDIYF) form a helical membrane-spanning segment. Residues 25 to 442 (TSPLVHGMTP…SYYHTYDRFF (418 aa)) lie on the Lumenal side of the membrane. N128, N192, and N350 each carry an N-linked (GlcNAc...) asparagine glycan. The helical transmembrane segment at 443 to 463 (LGVNVVIGFVGWISYASLLII) threads the bilayer. At 464–482 (KSHSNLIKGVSKEVKKPSH) the chain is on the cytoplasmic side. The helical transmembrane segment at 483–503 (LLPCSFVAIGILVAFFLLIQA) threads the bilayer. The Lumenal segment spans residues 504-508 (CPWTY). The helical transmembrane segment at 509–529 (YVYGLLPLPIWYAVLREFQVI) threads the bilayer. Over 530-543 (QDLVVSVLTYPLSH) the chain is Cytoplasmic. The helical transmembrane segment at 544–564 (FVGYLLAFTLGIEVLVLSFFY) threads the bilayer. R565 is a topological domain (lumenal). A helical membrane pass occupies residues 566-586 (YMLTAGLTAFAAWPFLTRLWT). Over 587 to 591 (RAKMT) the chain is Cytoplasmic. A helical transmembrane segment spans residues 592-612 (SLSWTFFSLLLAVFPLMPVVG). The Lumenal portion of the chain corresponds to 613–618 (RKPDIS). Residues 619–639 (LVMGAGLLVLLLSLCVVTSLM) form a helical membrane-spanning segment. Over 640–649 (KRKDSFIKEE) the chain is Cytoplasmic. The chain crosses the membrane as a helical span at residues 650-670 (LLVHLLQVLSTVLSMYVVYST). Over 671–685 (QSSLLRKQGLPLMNQ) the chain is Lumenal. The chain crosses the membrane as a helical span at residues 686–706 (IISWATLASSLVVPLLSSPVL). The Cytoplasmic portion of the chain corresponds to 707 to 723 (FQRLFSILLSLMSTYLL). Residues 724–744 (LSTGYEALFPLVLSCLMFVWI) form a helical membrane-spanning segment. At 745 to 786 (NIEQETLQQSGVCCKQKLTSIQFSYNTDITQFRQLYLDDIRR) the chain is on the lumenal side. The helical transmembrane segment at 787-807 (AFFLVFFLVTAFFGTGNIASI) threads the bilayer. The Cytoplasmic segment spans residues 808-824 (NSFDLASVYCFLTVFSP). Residues 825-845 (FMMGALMMWKILIPFVLVMCA) traverse the membrane as a helical segment. The Lumenal portion of the chain corresponds to 846–858 (FEAVQLTTQLSSK). Residues 859–879 (SLFLIVLVISDIMALHFFFLV) traverse the membrane as a helical segment. Topologically, residues 880 to 894 (KDYGSWLDIGTSISH) are cytoplasmic. The chain crosses the membrane as a helical span at residues 895-915 (YVIVMSMTIFLVFLNGLAQLL). Topologically, residues 916 to 931 (TTKKLRLCGKPKSHFM) are lumenal.

This sequence belongs to the PIGG/PIGN/PIGO family. PIGN subfamily.

The protein resides in the endoplasmic reticulum membrane. Its pathway is glycolipid biosynthesis; glycosylphosphatidylinositol-anchor biosynthesis. In terms of biological role, ethanolamine phosphate transferase that catalyzes an ethanolamine phosphate (EtNP) transfer from phosphatidylethanolamine (PE) to the 2-OH position of the first alpha-1,4-linked mannose of the alpha-D-Man-(1-&gt;6)-alpha-D-Man-(1-&gt;4)-alpha-D-GlcN-(1-&gt;6)-(1-radyl,2-acyl-sn-glycero-3-phospho)-2-acyl-inositol (also termed H3) intermediate to generate an alpha-D-Man-(1-&gt;6)-2-PEtn-alpha-D-Man-(1-&gt;4)-alpha-D-GlcN-(1-&gt;6)-(1-radyl,2-acyl-sn-glycero-3-phospho)-2-acyl-inositol and participates in the eighth step of the glycosylphosphatidylinositol-anchor biosynthesis. May act as suppressor of replication stress and chromosome missegregation. This Homo sapiens (Human) protein is GPI ethanolamine phosphate transferase 1.